The chain runs to 143 residues: Deoxyuridine 5'-triphosphate nucleotidohydrolase (143 aa).

Substrate contacts are provided by residues Arg62–Gly64, Asn75, Thr79–Asp81, and Lys89.

This sequence belongs to the dUTPase family. The cofactor is Mg(2+).

The enzyme catalyses dUTP + H2O = dUMP + diphosphate + H(+). Its pathway is pyrimidine metabolism; dUMP biosynthesis; dUMP from dCTP (dUTP route): step 2/2. This enzyme is involved in nucleotide metabolism: it produces dUMP, the immediate precursor of thymidine nucleotides and it decreases the intracellular concentration of dUTP so that uracil cannot be incorporated into DNA. This chain is Deoxyuridine 5'-triphosphate nucleotidohydrolase, found in Clostridium kluyveri (strain ATCC 8527 / DSM 555 / NBRC 12016 / NCIMB 10680 / K1).